Here is a 337-residue protein sequence, read N- to C-terminus: Lipoyl synthase (337 aa).

[4Fe-4S] cluster is bound by residues cysteine 81, cysteine 86, cysteine 92, cysteine 107, cysteine 111, cysteine 114, and serine 323. The Radical SAM core domain occupies 93 to 312 (FSHGTATFMI…EEYGNALGFS (220 aa)).

This sequence belongs to the radical SAM superfamily. Lipoyl synthase family. Requires [4Fe-4S] cluster as cofactor.

The protein resides in the cytoplasm. The catalysed reaction is [[Fe-S] cluster scaffold protein carrying a second [4Fe-4S](2+) cluster] + N(6)-octanoyl-L-lysyl-[protein] + 2 oxidized [2Fe-2S]-[ferredoxin] + 2 S-adenosyl-L-methionine + 4 H(+) = [[Fe-S] cluster scaffold protein] + N(6)-[(R)-dihydrolipoyl]-L-lysyl-[protein] + 4 Fe(3+) + 2 hydrogen sulfide + 2 5'-deoxyadenosine + 2 L-methionine + 2 reduced [2Fe-2S]-[ferredoxin]. It participates in protein modification; protein lipoylation via endogenous pathway; protein N(6)-(lipoyl)lysine from octanoyl-[acyl-carrier-protein]: step 2/2. Functionally, catalyzes the radical-mediated insertion of two sulfur atoms into the C-6 and C-8 positions of the octanoyl moiety bound to the lipoyl domains of lipoate-dependent enzymes, thereby converting the octanoylated domains into lipoylated derivatives. The chain is Lipoyl synthase from Xanthomonas oryzae pv. oryzae (strain MAFF 311018).